The sequence spans 726 residues: Amino-acid acetyltransferase, mitochondrial (726 aa).

Residues 1 to 18 (MSSRTLVGLRSTTSTHLQ) are compositionally biased toward polar residues. The N-terminal 44 residues, 1–44 (MSSRTLVGLRSTTSTHLQRSGVAAAAAVSSSSTSSSGSAPRRCL), are a transit peptide targeting the mitochondrion. Positions 1 to 64 (MSSRTLVGLR…SAEFSSSSKS (64 aa)) are disordered. The span at 20–39 (SGVAAAAAVSSSSTSSSGSA) shows a compositional bias: low complexity. Polar residues predominate over residues 45-58 (SSASGRQVQQSAEF). The N-acetyltransferase domain maps to 547–716 (DRPRLGLDDP…YEAVCRSIQP (170 aa)).

This sequence belongs to the acetyltransferase family.

The protein localises to the mitochondrion. The enzyme catalyses L-glutamate + acetyl-CoA = N-acetyl-L-glutamate + CoA + H(+). It functions in the pathway amino-acid biosynthesis; L-arginine biosynthesis; N(2)-acetyl-L-ornithine from L-glutamate: step 1/4. Its function is as follows. N-acetylglutamate synthase involved in arginine biosynthesis. In Aspergillus niger (strain ATCC MYA-4892 / CBS 513.88 / FGSC A1513), this protein is Amino-acid acetyltransferase, mitochondrial (arg2).